We begin with the raw amino-acid sequence, 314 residues long: Methionyl-tRNA formyltransferase (314 aa).

110–113 (SLLP) provides a ligand contact to (6S)-5,6,7,8-tetrahydrofolate.

The protein belongs to the Fmt family.

It carries out the reaction L-methionyl-tRNA(fMet) + (6R)-10-formyltetrahydrofolate = N-formyl-L-methionyl-tRNA(fMet) + (6S)-5,6,7,8-tetrahydrofolate + H(+). Attaches a formyl group to the free amino group of methionyl-tRNA(fMet). The formyl group appears to play a dual role in the initiator identity of N-formylmethionyl-tRNA by promoting its recognition by IF2 and preventing the misappropriation of this tRNA by the elongation apparatus. The sequence is that of Methionyl-tRNA formyltransferase from Bacillus cytotoxicus (strain DSM 22905 / CIP 110041 / 391-98 / NVH 391-98).